The sequence spans 560 residues: Protein NRT1/ PTR FAMILY 2.5 (560 aa).

Positions 1–20 are disordered; the sequence is MADSKSGDTEVAHRSSDPSE. Transmembrane regions (helical) follow at residues 34–54, 77–97, 101–121, 141–161, 177–197, 207–227, 323–343, 372–392, 404–424, 441–461, 480–500, and 520–540; these read TLLGMSITSFGWGMNLIVFLI, MLPVVAAILADSFFGNIPVIS, FISLAGTSLLTLITSLNYLMP, ILYVALALVIIGSAGTRFTLA, FFNWFFLALYIGAITGTTAIV, LGFGLCAVANLISFIVFIAGV, AILRLVPLWAAVMFLSTPVAV, VIVLVFGCVFIMLNNWIIYPM, LQQVGIGHVFTILSMAISAVV, VLWLVPALVMVGIGEAFHFPA, SLTSVVIGISFYLSTAVIDVI, and YWVVVIGGVLNLGYFLVCSWF.

It belongs to the major facilitator superfamily. Proton-dependent oligopeptide transporter (POT/PTR) (TC 2.A.17) family. As to expression, expressed in the root epidermis or cortex.

Its subcellular location is the membrane. Transporter involved in a passive nitrate efflux. The sequence is that of Protein NRT1/ PTR FAMILY 2.5 (NPF2.5) from Arabidopsis thaliana (Mouse-ear cress).